Consider the following 321-residue polypeptide: MGRPPCCDKVGIKKGPWTPEEDIILVSYIQEHGPGNWRSVPTNTGLLRCSKSCRLRWTNYLRPGIKRGNFTPHEEGMIIHLQALLGNKWAAIASYLPQRTDNDIKNYWNTHLKKKIKKFQSALSPHMASDSTTSTCTNHQFVPRSYAGDDHHRRGSSFEVINGHSSAHPSLNSPISTYASSTENISRLLEGWMRSSPKATKEKLHQNSSLEEGSIDMTGNSMAVAAVTSVQCYRPKLEQGGGELVANDEFESILEYENLNDDHHQTTDATIPSDDHDHDHEMKMDHDQKKHNPPLSFLEKWLLDESAAQGEEMMDQLSPIF.

HTH myb-type domains follow at residues Lys9 to Ile65 and Lys66 to Ile116. 2 DNA-binding regions (H-T-H motif) span residues Trp37 to Leu61 and Trp89 to Leu112. S-nitrosocysteine is present on residues Cys49 and Cys53. 2 disordered regions span residues Ser196 to Ile215 and His263 to His291. Over residues Gln206–Ile215 the composition is skewed to polar residues. Over residues Ser273–Lys290 the composition is skewed to basic and acidic residues.

In terms of tissue distribution, restricted to stomatal guard cells. Mostly expressed in leaves, cotyledons, hypocotyls, seeds and ripened berry skins.

The protein resides in the nucleus. Functionally, transcription factor involved in the regulation of gene (e.g. drought-regulated and flavonoid biosynthetic genes) expression and stomatal movements leading to negative regulation of responses to drought and responses to other physiological stimuli (e.g. light). This chain is Transcription factor MYB60, found in Vitis vinifera (Grape).